The sequence spans 427 residues: Tol-Pal system protein TolB (427 aa).

The signal sequence occupies residues 1 to 23; sequence MKLLKRLVSVFAIVLAVGSNAFA.

The protein belongs to the TolB family. The Tol-Pal system is composed of five core proteins: the inner membrane proteins TolA, TolQ and TolR, the periplasmic protein TolB and the outer membrane protein Pal. They form a network linking the inner and outer membranes and the peptidoglycan layer.

It is found in the periplasm. In terms of biological role, part of the Tol-Pal system, which plays a role in outer membrane invagination during cell division and is important for maintaining outer membrane integrity. The sequence is that of Tol-Pal system protein TolB from Haemophilus influenzae (strain ATCC 51907 / DSM 11121 / KW20 / Rd).